The primary structure comprises 319 residues: Pyrroline-5-carboxylate reductase 1, mitochondrial (319 aa).

S2 carries the N-acetylserine modification. NADP(+)-binding positions include 6–11 (IGAGQL) and S34. Positions 8, 10, 11, 34, 36, 56, 70, 71, and 97 each coordinate NADPH. NADP(+)-binding positions include N56, 69-72 (AVKP), and 95-97 (CAA). E164 lines the L-proline pocket. N230 contributes to the NADPH binding site. A237 and T238 together coordinate L-proline. S278 and S301 each carry phosphoserine. Positions 294–319 (SPAGTALSPSGHTKLLPRSLAPAGKD) are disordered.

Belongs to the pyrroline-5-carboxylate reductase family. Homodecamer; composed of 5 homodimers. Interacts with LTO1.

The protein resides in the mitochondrion. It carries out the reaction L-proline + NADP(+) = (S)-1-pyrroline-5-carboxylate + NADPH + 2 H(+). It catalyses the reaction L-proline + NAD(+) = (S)-1-pyrroline-5-carboxylate + NADH + 2 H(+). It participates in amino-acid biosynthesis; L-proline biosynthesis; L-proline from L-glutamate 5-semialdehyde: step 1/1. With respect to regulation, subject to competitive inhibition by the reaction product proline. Subject to competitive inhibition by stearoyl coenzyme A. Oxidoreductase that catalyzes the last step in proline biosynthesis, which corresponds to the reduction of pyrroline-5-carboxylate to L-proline using NAD(P)H. At physiologic concentrations, has higher specific activity in the presence of NADH. Involved in the cellular response to oxidative stress. In Homo sapiens (Human), this protein is Pyrroline-5-carboxylate reductase 1, mitochondrial.